The chain runs to 342 residues: tRNA dimethylallyltransferase (342 aa).

39-46 (GPTGSGKT) contacts ATP. 41–46 (TGSGKT) serves as a coordination point for substrate. Positions 64-67 (DSMQ) are interaction with substrate tRNA.

Belongs to the IPP transferase family. As to quaternary structure, monomer. Requires Mg(2+) as cofactor.

The catalysed reaction is adenosine(37) in tRNA + dimethylallyl diphosphate = N(6)-dimethylallyladenosine(37) in tRNA + diphosphate. Functionally, catalyzes the transfer of a dimethylallyl group onto the adenine at position 37 in tRNAs that read codons beginning with uridine, leading to the formation of N6-(dimethylallyl)adenosine (i(6)A). The sequence is that of tRNA dimethylallyltransferase from Chlamydia pneumoniae (Chlamydophila pneumoniae).